The chain runs to 393 residues: Thermostable carboxypeptidase 1 (393 aa).

3 residues coordinate Zn(2+): His-104, Asp-109, and His-245. Tyr-302 (proton donor) is an active-site residue. Catalysis depends on Glu-373, which acts as the Nucleophile.

Belongs to the peptidase M20 family. Homotetramer. It depends on Zn(2+) as a cofactor.

Functionally, can release basic, acidic, aromatic, and, to a lesser extent, aliphatic amino acids. The protein is Thermostable carboxypeptidase 1 (cpsA1) of Saccharolobus solfataricus (strain ATCC 35092 / DSM 1617 / JCM 11322 / P2) (Sulfolobus solfataricus).